We begin with the raw amino-acid sequence, 144 residues long: AP-4 complex subunit sigma-1 (144 aa).

Belongs to the adaptor complexes small subunit family. Adaptor protein complex 4 (AP-4) is a heterotetramer composed of two large adaptins (epsilon-type subunit AP4E1 and beta-type subunit AP4B1), a medium adaptin (mu-type subunit AP4M1) and a small adaptin (sigma-type AP4S1). As to expression, widely expressed.

It localises to the golgi apparatus. Its subcellular location is the trans-Golgi network membrane. Functionally, component of the adaptor protein complex 4 (AP-4). Adaptor protein complexes are vesicle coat components involved both in vesicle formation and cargo selection. They control the vesicular transport of proteins in different trafficking pathways. AP-4 forms a non clathrin-associated coat on vesicles departing the trans-Golgi network (TGN) and may be involved in the targeting of proteins from the trans-Golgi network (TGN) to the endosomal-lysosomal system. It is also involved in protein sorting to the basolateral membrane in epithelial cells and the proper asymmetric localization of somatodendritic proteins in neurons. AP-4 is involved in the recognition and binding of tyrosine-based sorting signals found in the cytoplasmic part of cargos, but may also recognize other types of sorting signal. The polypeptide is AP-4 complex subunit sigma-1 (Homo sapiens (Human)).